The primary structure comprises 224 residues: Ribose-5-phosphate isomerase A (224 aa).

Substrate-binding positions include 32–35 (TGST), 85–88 (DGAD), and 98–101 (KGGG). E107 acts as the Proton acceptor in catalysis. Residue K125 coordinates substrate.

Belongs to the ribose 5-phosphate isomerase family. In terms of assembly, homodimer.

The catalysed reaction is aldehydo-D-ribose 5-phosphate = D-ribulose 5-phosphate. The protein operates within carbohydrate degradation; pentose phosphate pathway; D-ribose 5-phosphate from D-ribulose 5-phosphate (non-oxidative stage): step 1/1. In terms of biological role, catalyzes the reversible conversion of ribose-5-phosphate to ribulose 5-phosphate. The chain is Ribose-5-phosphate isomerase A from Pseudomonas putida (strain W619).